The chain runs to 139 residues: ATP synthase epsilon chain (139 aa).

Belongs to the ATPase epsilon chain family. F-type ATPases have 2 components, CF(1) - the catalytic core - and CF(0) - the membrane proton channel. CF(1) has five subunits: alpha(3), beta(3), gamma(1), delta(1), epsilon(1). CF(0) has three main subunits: a, b and c.

The protein resides in the cell membrane. In terms of biological role, produces ATP from ADP in the presence of a proton gradient across the membrane. The protein is ATP synthase epsilon chain of Symbiobacterium thermophilum (strain DSM 24528 / JCM 14929 / IAM 14863 / T).